Consider the following 64-residue polypeptide: UPF0337 protein SAR0874 (64 aa).

The disordered stretch occupies residues 1–40 (MADESKFEQAKGNVKETVGNVTDNKNLENEGKEDKASGKA). The segment covering 25–40 (KNLENEGKEDKASGKA) has biased composition (basic and acidic residues).

Belongs to the UPF0337 (CsbD) family.

This is UPF0337 protein SAR0874 from Staphylococcus aureus (strain MRSA252).